A 205-amino-acid polypeptide reads, in one-letter code: Phosphoheptose isomerase (205 aa).

The 163-residue stretch at 38–200 folds into the SIS domain; it reads LAVRLALGSK…LFEAVGELEP (163 aa). Position 53–55 (53–55) interacts with substrate; the sequence is NGG. Zn(2+)-binding residues include His62 and Glu66. Substrate contacts are provided by residues Glu66, 95–96, 121–123, Ser126, and Gln173; these read ND and STS. The Zn(2+) site is built by Gln173 and His181.

This sequence belongs to the SIS family. GmhA subfamily. Homotetramer. Zn(2+) serves as cofactor.

Its subcellular location is the cytoplasm. It carries out the reaction 2 D-sedoheptulose 7-phosphate = D-glycero-alpha-D-manno-heptose 7-phosphate + D-glycero-beta-D-manno-heptose 7-phosphate. The protein operates within carbohydrate biosynthesis; D-glycero-D-manno-heptose 7-phosphate biosynthesis; D-glycero-alpha-D-manno-heptose 7-phosphate and D-glycero-beta-D-manno-heptose 7-phosphate from sedoheptulose 7-phosphate: step 1/1. Catalyzes the isomerization of sedoheptulose 7-phosphate in D-glycero-D-manno-heptose 7-phosphate. The chain is Phosphoheptose isomerase from Maridesulfovibrio salexigens (strain ATCC 14822 / DSM 2638 / NCIMB 8403 / VKM B-1763) (Desulfovibrio salexigens).